We begin with the raw amino-acid sequence, 292 residues long: Zinc finger protein OZF (292 aa).

10 C2H2-type zinc fingers span residues 16-38, 44-66, 72-94, 100-122, 128-150, 156-178, 184-206, 212-234, 240-262, and 268-290; these read FACK…EHFH, FECN…QNTH, FECN…QKIH, FECK…QRTH, FVCK…EKIH, FKCS…QNIH, YECN…VRIH, YECN…VRSH, YGCN…LRIH, and YQCS…QKIH. Glycyl lysine isopeptide (Lys-Gly) (interchain with G-Cter in SUMO2) cross-links involve residues Lys28, Lys51, and Lys56. Glycyl lysine isopeptide (Lys-Gly) (interchain with G-Cter in SUMO) cross-links involve residues Lys157 and Lys169. A Glycyl lysine isopeptide (Lys-Gly) (interchain with G-Cter in SUMO2) cross-link involves residue Lys173. The interaction with TERF2IP stretch occupies residues 212-292; the sequence is YECNVCGKAF…HIRHQKIHTH (81 aa).

Belongs to the krueppel C2H2-type zinc-finger protein family. In terms of assembly, binds DNA. Interacts with SUMO conjugating enzyme UBC9/UBE2I. Interacts with the telomeric protein TERF2IP. In terms of processing, sumoylated. As to expression, liver, skeletal and heart muscle, mammary cells. Very low levels in brain, lung, placenta and kidney. Strongly overexpressed in many pancreas and colorectal cancers. Increased gene copy numbers are detected in 3 of 12 tumor cell lines and 2 of 12 primary pancreatic carcinomas. Overexpressed in 80% of colorectal cancers.

Its subcellular location is the nucleus. The protein is Zinc finger protein OZF (ZNF146) of Homo sapiens (Human).